The sequence spans 207 residues: Small ribosomal subunit protein eS1 (207 aa).

It belongs to the eukaryotic ribosomal protein eS1 family.

The polypeptide is Small ribosomal subunit protein eS1 (Methanosarcina barkeri (strain Fusaro / DSM 804)).